Reading from the N-terminus, the 325-residue chain is Small ribosomal subunit protein RACK1 (325 aa).

WD repeat units lie at residues 5 to 48 (QMKL…WDVD), 58 to 99 (IGRP…WDLN), 100 to 141 (QGVS…WNTL), 143 to 186 (QCKY…WNLG), 187 to 227 (NCRL…LWDL), 228 to 268 (NEGK…WDLE), and 269 to 320 (DKKE…YQVS).

The protein belongs to the WD repeat G protein beta family. Ribosomal protein RACK1 subfamily.

Its function is as follows. Required for the expression of antimicrobial peptide nlp-29 in response to fungal infection or physical injury. The protein is Small ribosomal subunit protein RACK1 (rack-1) of Caenorhabditis elegans.